The chain runs to 703 residues: Harmonin-binding protein USHBP1 (703 aa).

The segment covering 1 to 15 has biased composition (basic residues); the sequence is MSARATRPRSRRGRH. Disordered regions lie at residues 1–113 and 138–172; these read MSAR…PPGN and HQPP…CQRE. Residues 189–227 are a coiled coil; it reads SREDELVRTQASLEAIRAEKETLQKEVQELQDSLLRLEP. Positions 228-256 are disordered; sequence CPHLSHNQAGGSGSGSSSSEADREPWETQ. Positions 289-309 form a coiled coil; it reads EMHIMEAQMEQLRGSIEKLKC. Residues 396–416 are disordered; it reads MDAGAQQNPQPSPEGSSVDKP. A compositionally biased stretch (polar residues) spans 400-410; the sequence is AQQNPQPSPEG. Positions 476-513 form a coiled coil; that stretch reads RLEKTQIQQDLVAAREALADLMLRLQLVRREKRGLELR. The disordered stretch occupies residues 540–583; the sequence is AGGANSSGGHSSGGGSSGDEEEWYQGLPAVPGGTSGIDGGQVGR. Gly residues predominate over residues 572–581; that stretch reads GTSGIDGGQV. Residues 596 to 681 are a coiled coil; it reads ASLTRTLDLQ…QAEEVAVLEA (86 aa).

Belongs to the MCC family. As to quaternary structure, interacts via its C-terminus with the first PDZ domain of USH1C. In terms of tissue distribution, highest level of expression in heart, and moderate to low expression in skeletal muscle, kidney, liver, small intestine, placenta and lung.

The protein is Harmonin-binding protein USHBP1 of Homo sapiens (Human).